The chain runs to 358 residues: tRNA-specific 2-thiouridylase MnmA (358 aa).

ATP is bound by residues 10 to 17 and Met-36; that span reads AMSGGVDS. Cys-105 functions as the Nucleophile in the catalytic mechanism. Cys-105 and Cys-202 are joined by a disulfide. Gly-129 contacts ATP. Positions 152–154 are interaction with tRNA; the sequence is KDQ. Cys-202 acts as the Cysteine persulfide intermediate in catalysis. Residues 308–309 are interaction with tRNA; that stretch reads RY.

Belongs to the MnmA/TRMU family.

The protein resides in the cytoplasm. It catalyses the reaction S-sulfanyl-L-cysteinyl-[protein] + uridine(34) in tRNA + AH2 + ATP = 2-thiouridine(34) in tRNA + L-cysteinyl-[protein] + A + AMP + diphosphate + H(+). Catalyzes the 2-thiolation of uridine at the wobble position (U34) of tRNA, leading to the formation of s(2)U34. In Magnetococcus marinus (strain ATCC BAA-1437 / JCM 17883 / MC-1), this protein is tRNA-specific 2-thiouridylase MnmA.